We begin with the raw amino-acid sequence, 321 residues long: Eukaryotic translation initiation factor 3 subunit I (321 aa).

5 WD repeats span residues 8–47 (GHERNITQIKYNRMGDLLFSAAKDTRPTVWYSLNGERLGT), 50–89 (GHGGAVWCIDVNYDTTQFISGGADNCLRLWDCEKGVTLSK), 140–179 (VDNSKVTAGLWGPLDQFLVTGHENGELCQWDVKSGNKLIS), 182–221 (EHSKQINDIQMYKDSTMFVTASKDTTAKLFDTDSLRHLKT), and 279–318 (GHFGPINSLAFHPDGRSYSSGGEDGYVRIHSFDPSYDDIE).

It belongs to the eIF-3 subunit I family. As to quaternary structure, component of the eukaryotic translation initiation factor 3 (eIF-3) complex.

Its subcellular location is the cytoplasm. In terms of biological role, component of the eukaryotic translation initiation factor 3 (eIF-3) complex, which is involved in protein synthesis of a specialized repertoire of mRNAs and, together with other initiation factors, stimulates binding of mRNA and methionyl-tRNAi to the 40S ribosome. The eIF-3 complex specifically targets and initiates translation of a subset of mRNAs involved in cell proliferation. This Nematostella vectensis (Starlet sea anemone) protein is Eukaryotic translation initiation factor 3 subunit I.